Consider the following 494-residue polypeptide: UPF0371 protein M6_Spy1067 (494 aa).

This sequence belongs to the UPF0371 family.

The polypeptide is UPF0371 protein M6_Spy1067 (Streptococcus pyogenes serotype M6 (strain ATCC BAA-946 / MGAS10394)).